The sequence spans 295 residues: Aspartate carbamoyltransferase catalytic subunit (295 aa).

Carbamoyl phosphate-binding residues include R54 and T55. K82 is an L-aspartate binding site. Positions 104, 132, and 135 each coordinate carbamoyl phosphate. Residues R165 and R218 each coordinate L-aspartate. Positions 257 and 258 each coordinate carbamoyl phosphate.

Belongs to the aspartate/ornithine carbamoyltransferase superfamily. ATCase family. Heterododecamer (2C3:3R2) of six catalytic PyrB chains organized as two trimers (C3), and six regulatory PyrI chains organized as three dimers (R2).

It catalyses the reaction carbamoyl phosphate + L-aspartate = N-carbamoyl-L-aspartate + phosphate + H(+). The protein operates within pyrimidine metabolism; UMP biosynthesis via de novo pathway; (S)-dihydroorotate from bicarbonate: step 2/3. Its function is as follows. Catalyzes the condensation of carbamoyl phosphate and aspartate to form carbamoyl aspartate and inorganic phosphate, the committed step in the de novo pyrimidine nucleotide biosynthesis pathway. The sequence is that of Aspartate carbamoyltransferase catalytic subunit from Wolbachia pipientis subsp. Culex pipiens (strain wPip).